Here is a 118-residue protein sequence, read N- to C-terminus: NLYQFGGMIQCANKGARSWLSYVNYGCYCGWGGSGTPVDELDRCCQIHDNCYGEAEKKRCGPKMTLYSWECANDVPVCNSKSACEGFVCDCDAAAAKCFAKAPYNKNNIGIGSKTRCQ.

Intrachain disulfides connect Cys-11–Cys-71, Cys-27–Cys-117, Cys-29–Cys-45, Cys-44–Cys-98, Cys-51–Cys-91, Cys-60–Cys-84, and Cys-78–Cys-89. Ca(2+) is bound by residues Tyr-28, Gly-30, and Gly-32. His-48 is an active-site residue. Asp-49 is a binding site for Ca(2+). The active site involves Asp-92.

Requires Ca(2+) as cofactor. As to expression, expressed by the venom gland.

The protein resides in the secreted. The enzyme catalyses a 1,2-diacyl-sn-glycero-3-phosphocholine + H2O = a 1-acyl-sn-glycero-3-phosphocholine + a fatty acid + H(+). Snake venom phospholipase A2 (PLA2) that potently inhibits ADP-(IC(50)=12 nM) and collagen-induced (IC(50)=4 nM) platelet aggregation when tested on human whole blood. PLA2 catalyzes the calcium-dependent hydrolysis of the 2-acyl groups in 3-sn-phosphoglycerides. The protein is Basic phospholipase A2 acanthin-2 of Acanthophis antarcticus (Common death adder).